Reading from the N-terminus, the 239-residue chain is IkB-like protein (239 aa).

ANK repeat units lie at residues 48-80 (SKITVFMWICIYGRLDFLRFLFKQESYPGEIIS), 87-118 (DGNSVWHYLAEKKNHLLLEEVLEYFGKIGIKV), 124-153 (NGITPVMKAAMRGRTLSVLSLIKYGANPNQ), and 158-187 (KGFNTWDWAVFTGHADLVKSLNKDYQKPLF). The Nuclear localization signal signature appears at 81–87 (HYRRDKD). Positions 203–214 (KKKPKIIITSCE) match the Nuclear localization signal motif. The PxIxITxC motif; Interaction with host PPP3CA signature appears at 206 to 213 (PKIIITSC). Positions 228–231 (FLCV) match the FLCV motif motif.

Belongs to the asfivirus A238L family. In terms of assembly, interacts with host PPIA. Interacts with host PPP3CA/Calcineurin. Interacts with host RELA/p65; interaction of the 32 kDa form with host RELA results in the formation of a stable complex with NF-kappa-B. Interacts with host PPP3R1. Interacts with host EP300; this interaction inhibits the association of host EP300 with host RELA, JUN and NFATC2. In terms of processing, the protein exists in a 28 kDa and a 32 kDa form, probably due to post-translational modifications which are neither phosphorylation, nor sumoylation.

The protein localises to the host nucleus. The protein resides in the host cytoplasm. Its function is as follows. IkB-like protein that inhibits the binding of NF-kappa-B to DNA, thereby downregulating pro-inflammatory cytokine production. Forms a heterodimer with the NF-kappa-B subunit RELA/p65 and prevents the activation of the NF-kappa-B transcription factor. Inhibits calcineurin function, which is required for the induction of nuclear factor of activated T cells (NFAT)-dependent immune response genes. Prevents the binding of substrates to calcineurin without affecting the phosphatase activity. Does not contain the serine residues that are phosphorylated by host IkB kinase and thus is not degraded following stimulation of the NFkB pathway. This Ornithodoros (relapsing fever ticks) protein is IkB-like protein (A238L).